The following is a 191-amino-acid chain: Probable DNA replication complex GINS protein PSF1 (191 aa).

This sequence belongs to the GINS1/PSF1 family. Component of the GINS complex which is a heterotetramer of gins1, gins2, gins3 and gins4.

Its subcellular location is the nucleus. Functionally, the GINS complex plays an essential role in the initiation of DNA replication. This chain is Probable DNA replication complex GINS protein PSF1 (gins1), found in Dictyostelium discoideum (Social amoeba).